The sequence spans 351 residues: MSGLIAYCRQGFEPELAAELRDRAVLLGIAGDIHAQRNHGFVLLRCDPLHVDTLLQQLHWRRLIFARQTLRLHAELKTLNSRDRIAPILAALPKTPCFGDLWIEYPDSDMGKPLAGLARSFGNALRPVLRSAGRLSAQLHPQWPRLHVCFLSGDHVLLGSTRSVDSAPWQLGIPRLKLLPEAPSRSALKLEEALITLLTSNEREAKLRPGMRATDLGAAPGGWTWVLIRQHLRVTSIDNAVLRPSLLNHPLVQHVRADGFRWTPPRPMDWMVCDMVEQPRRVAERMAVWLREGWCRHMIFNLKLPMKKRWDETRLCLERFETQAVVPLTLRAKQLYHDREEITVYASNNAR.

S-adenosyl-L-methionine contacts are provided by residues S186, 219-222 (APGG), D238, D258, and D274. The Proton acceptor role is filled by K303.

It belongs to the class I-like SAM-binding methyltransferase superfamily. RNA methyltransferase RlmE family. RlmM subfamily. In terms of assembly, monomer.

Its subcellular location is the cytoplasm. The enzyme catalyses cytidine(2498) in 23S rRNA + S-adenosyl-L-methionine = 2'-O-methylcytidine(2498) in 23S rRNA + S-adenosyl-L-homocysteine + H(+). Catalyzes the 2'-O-methylation at nucleotide C2498 in 23S rRNA. The chain is Ribosomal RNA large subunit methyltransferase M from Xylella fastidiosa (strain 9a5c).